The primary structure comprises 538 residues: Probable bifunctional riboflavin biosynthesis protein RIBA 1, chloroplastic (538 aa).

Over residues M1–L16 the composition is skewed to polar residues. The segment at M1 to N29 is disordered. A chloroplast-targeting transit peptide spans M1–V73. Residues R46–K311 form a DHBP synthase region. Residues R134–E135, D139, R249–T253, and E273 each bind D-ribulose 5-phosphate. E135 lines the Mg(2+) pocket. H252 serves as a coordination point for Mg(2+). Residues R312–Q530 are GTP cyclohydrolase II. R362 to E366 is a binding site for GTP. 3 residues coordinate Zn(2+): C367, C378, and C380. GTP contacts are provided by residues Q383, E406 to R408, and T428. The active-site Proton acceptor; for GTP cyclohydrolase activity is the D440. R442 (nucleophile; for GTP cyclohydrolase activity) is an active-site residue. GTP is bound by residues T463 and K468. The tract at residues H506 to E538 is disordered.

This sequence in the N-terminal section; belongs to the DHBP synthase family. In the C-terminal section; belongs to the GTP cyclohydrolase II family. The cofactor is Mg(2+). It depends on Mn(2+) as a cofactor. Requires Zn(2+) as cofactor.

It localises to the plastid. Its subcellular location is the chloroplast. It carries out the reaction D-ribulose 5-phosphate = (2S)-2-hydroxy-3-oxobutyl phosphate + formate + H(+). It catalyses the reaction GTP + 4 H2O = 2,5-diamino-6-hydroxy-4-(5-phosphoribosylamino)-pyrimidine + formate + 2 phosphate + 3 H(+). It participates in cofactor biosynthesis; riboflavin biosynthesis; 2-hydroxy-3-oxobutyl phosphate from D-ribulose 5-phosphate: step 1/1. It functions in the pathway cofactor biosynthesis; riboflavin biosynthesis; 5-amino-6-(D-ribitylamino)uracil from GTP: step 1/4. Involved in riboflavin biosynthesis. Catalyzes both the conversion of D-ribulose 5-phosphate to formate and 3,4-dihydroxy-2-butanone 4-phosphate and the conversion of GTP to 2,5-diamino-6-ribosylamino-4(3H)-pyrimidinone 5'-phosphate (DARP), formate and pyrophosphate. This Oryza sativa subsp. japonica (Rice) protein is Probable bifunctional riboflavin biosynthesis protein RIBA 1, chloroplastic (RIBA1).